We begin with the raw amino-acid sequence, 338 residues long: Fructose-1,6-bisphosphatase class 1 1 (338 aa).

Glu-94, Asp-116, Leu-118, and Asp-119 together coordinate Mg(2+). Substrate-binding positions include 119 to 122 (DGSS), Asn-210, and Lys-276. Glu-282 is a Mg(2+) binding site.

The protein belongs to the FBPase class 1 family. In terms of assembly, homotetramer. Mg(2+) serves as cofactor.

The protein localises to the cytoplasm. It carries out the reaction beta-D-fructose 1,6-bisphosphate + H2O = beta-D-fructose 6-phosphate + phosphate. It participates in carbohydrate biosynthesis; gluconeogenesis. This Paraburkholderia phymatum (strain DSM 17167 / CIP 108236 / LMG 21445 / STM815) (Burkholderia phymatum) protein is Fructose-1,6-bisphosphatase class 1 1.